The sequence spans 49 residues: IgW transmembrane form Tm2T7/Tm7T7/Tm3T3 (49 aa).

A glycan (N-linked (GlcNAc...) asparagine) is linked at asparagine 3. A helical membrane pass occupies residues 25–45 (VAAFAILFILSFLYSTFVTVV).

Expressed in the spleen. May also be expressed in other lymphoid tissues.

Its subcellular location is the membrane. This Heterodontus francisci (Horn shark) protein is IgW transmembrane form Tm2T7/Tm7T7/Tm3T3.